Reading from the N-terminus, the 80-residue chain is Defensin-like protein 17 (80 aa).

Residues 1–29 (MAKSATIITFLFAALVLFAAFEAPTMVEA) form the signal peptide. Gln-30 bears the Pyrrolidone carboxylic acid mark. 4 cysteine pairs are disulfide-bonded: Cys-33/Cys-80, Cys-44/Cys-65, Cys-50/Cys-74, and Cys-54/Cys-76.

This sequence belongs to the DEFL family.

It localises to the secreted. Confers broad-spectrum resistance to pathogens. The protein is Defensin-like protein 17 (PDF1.2C) of Arabidopsis thaliana (Mouse-ear cress).